The chain runs to 312 residues: Olfactory receptor 1D5 (312 aa).

Over 1-25 (MDGDNQSENSQFLLLGISESPEQQQ) the chain is Extracellular. A glycan (N-linked (GlcNAc...) asparagine) is linked at asparagine 5. The helical transmembrane segment at 26–49 (ILFWMFLSMYLVTVLGNVLIILAI) threads the bilayer. Residues 50-57 (SSDSRLHT) are Cytoplasmic-facing. The helical transmembrane segment at 58 to 79 (PMYFFLANLSFTDLFFVTNTIP) threads the bilayer. The Extracellular portion of the chain corresponds to 80 to 100 (KMLVNLQSQNKAISYAGCLTQ). Cysteine 97 and cysteine 189 are disulfide-bonded. Residues 101-120 (LYFLVSLVTLDNLILAVMAY) form a helical membrane-spanning segment. Residues 121–140 (DRYVAICCPLHYVTAMSPGL) are Cytoplasmic-facing. The helical transmembrane segment at 141-158 (CVLLLSLCWGLSVFYGLL) threads the bilayer. Over 159 to 196 (LTLLLTRVTFCGPREIHYLFCDMYILLRLACSNTHIIH) the chain is Extracellular. A helical transmembrane segment spans residues 197–220 (TVLVATGCFIFLTPLGFMTTSYVR). Over 221–237 (IVRTILQIPSASKKYKA) the chain is Cytoplasmic. Residues 238 to 260 (FSTCASHLGVVSLFYGTLAMVYL) form a helical membrane-spanning segment. Residues 261–271 (QPLHTYSMKDS) are Extracellular-facing. A helical membrane pass occupies residues 272–291 (VATVMYAVVTPMMNPFIHSL). Topologically, residues 292–312 (RNKDMHGALGRVLRRLFQRPK) are cytoplasmic.

The protein belongs to the G-protein coupled receptor 1 family.

Its subcellular location is the cell membrane. In terms of biological role, odorant receptor. The chain is Olfactory receptor 1D5 (OR1D5) from Pan troglodytes (Chimpanzee).